The chain runs to 248 residues: MATEEGTGLTFYPMDQFIVSPLFGDGPVHFYTPTNVTLWMALAVAAIALLLVAGTRGRAVVPSRAQSIAELAYGFVYKMVEDVTGKDGIKYFPYIFTLFMFILVANFLGLIPMSFTTTSHIAVTAVLALAVFITVTVIGFVKNGAGFLSLFWVASAPLALRPILAVIEIISYFVRPVSHSIRLAGNMMAGHAVLKVFAGFAQVAAVAPIAIIGVMAIYGLEVLVSAIQAYVFTILTCVYLKDALHPHH.

6 helical membrane passes run 34–54, 91–111, 121–141, 147–167, 197–217, and 220–240; these read TNVTLWMALAVAAIALLLVAG, YFPYIFTLFMFILVANFLGLI, IAVTAVLALAVFITVTVIGFV, FLSLFWVASAPLALRPILAVI, FAGFAQVAAVAPIAIIGVMAI, and LEVLVSAIQAYVFTILTCVYL.

Belongs to the ATPase A chain family. F-type ATPases have 2 components, CF(1) - the catalytic core - and CF(0) - the membrane proton channel. CF(1) has five subunits: alpha(3), beta(3), gamma(1), delta(1), epsilon(1). CF(0) has four main subunits: a, b, b' and c.

It is found in the cell inner membrane. In terms of biological role, key component of the proton channel; it plays a direct role in the translocation of protons across the membrane. The chain is ATP synthase subunit a from Dinoroseobacter shibae (strain DSM 16493 / NCIMB 14021 / DFL 12).